The chain runs to 1658 residues: Protein TIC 214 (1658 aa).

6 helical membrane passes run 28-48, 52-72, 82-102, 130-150, 165-185, and 199-219; these read FGLYYGFLAALPIGLSQILTI, LLGGNTGGTLAVSGSIMGQLI, IYVMLLKPHAITLLVLPYMLF, IFLDSFILSLLNPVILPSPVF, ISFVISSSFGWLGGYILFINL, and VNYPLIKSIINQIFSIIILAL.

This sequence belongs to the TIC214 family. In terms of assembly, part of the Tic complex.

The protein localises to the plastid. Its subcellular location is the chloroplast inner membrane. Functionally, involved in protein precursor import into chloroplasts. May be part of an intermediate translocation complex acting as a protein-conducting channel at the inner envelope. The chain is Protein TIC 214 from Huperzia lucidula (Shining clubmoss).